The sequence spans 442 residues: Exodeoxyribonuclease 7 large subunit (442 aa).

This sequence belongs to the XseA family. Heterooligomer composed of large and small subunits.

It is found in the cytoplasm. The enzyme catalyses Exonucleolytic cleavage in either 5'- to 3'- or 3'- to 5'-direction to yield nucleoside 5'-phosphates.. Bidirectionally degrades single-stranded DNA into large acid-insoluble oligonucleotides, which are then degraded further into small acid-soluble oligonucleotides. The chain is Exodeoxyribonuclease 7 large subunit from Shewanella woodyi (strain ATCC 51908 / MS32).